Consider the following 704-residue polypeptide: Penicillin-binding protein H (704 aa).

The helical transmembrane segment at 23 to 43 (FFLAVFVLFTALIFKLGVVQI) threads the bilayer. Residues 197 to 223 (MNPNKSNSNGKNGALLDEKKNSSQRPK) are disordered. Residues 200–209 (NKSNSNGKNG) show a composition bias toward low complexity. Positions 212–223 (LDEKKNSSQRPK) are enriched in basic and acidic residues. The active-site Acyl-ester intermediate is serine 415.

Belongs to the transpeptidase family.

It localises to the cell membrane. It catalyses the reaction Preferential cleavage: (Ac)2-L-Lys-D-Ala-|-D-Ala. Also transpeptidation of peptidyl-alanyl moieties that are N-acyl substituents of D-alanine.. The protein operates within cell wall biogenesis; peptidoglycan biosynthesis. In terms of biological role, involved in the polymerization of peptidoglycan. Plays a redundant role with PBP-2A (pbpA) in determining the rod shape of the cell during vegetative growth and spore outgrowth. The sequence is that of Penicillin-binding protein H from Bacillus subtilis (strain 168).